The primary structure comprises 183 residues: MEQFRGTTILAARRDGQVVIGGDGQVTLGHTVMKGNARKVRRLHNGRVLAGFAGGTADAFTLFERFEGQLEKYRGNLTRAAVEMAKDWRSDRVLRRLEALLIVADREAMLVISGNGDVIDPEDDLVAIGSGGPYAQAAATALMRHSQLSARELVEQALGIAGDICIYTNRNLSIEELGPDSED.

Threonine 7 is an active-site residue. Na(+)-binding residues include glycine 162, cysteine 165, and threonine 168.

Belongs to the peptidase T1B family. HslV subfamily. As to quaternary structure, a double ring-shaped homohexamer of HslV is capped on each side by a ring-shaped HslU homohexamer. The assembly of the HslU/HslV complex is dependent on binding of ATP.

It localises to the cytoplasm. The catalysed reaction is ATP-dependent cleavage of peptide bonds with broad specificity.. With respect to regulation, allosterically activated by HslU binding. Functionally, protease subunit of a proteasome-like degradation complex believed to be a general protein degrading machinery. This chain is ATP-dependent protease subunit HslV, found in Alkalilimnicola ehrlichii (strain ATCC BAA-1101 / DSM 17681 / MLHE-1).